The primary structure comprises 511 residues: T-complex protein 1 subunit eta (511 aa).

The protein belongs to the TCP-1 chaperonin family. As to quaternary structure, component of the T-complex protein 1 (TCP1) complex.

It is found in the cytoplasm. Its function is as follows. Molecular chaperone; assists the folding of proteins upon ATP hydrolysis. This is T-complex protein 1 subunit eta (CCT7) from Encephalitozoon cuniculi (strain GB-M1) (Microsporidian parasite).